We begin with the raw amino-acid sequence, 386 residues long: 2-isopropylmalate synthase (386 aa).

Residues V12–Y265 enclose the Pyruvate carboxyltransferase domain. A divalent metal cation-binding residues include D21, H203, H205, and N239.

Belongs to the alpha-IPM synthase/homocitrate synthase family. In terms of assembly, homodimer. The cofactor is a divalent metal cation.

The catalysed reaction is 3-methyl-2-oxobutanoate + acetyl-CoA + H2O = (2S)-2-isopropylmalate + CoA + H(+). It functions in the pathway amino-acid biosynthesis; L-leucine biosynthesis; L-leucine from 3-methyl-2-oxobutanoate: step 1/4. With respect to regulation, is not inhibited by leucine. Functionally, catalyzes the condensation of the acetyl group of acetyl-CoA with 3-methyl-2-oxobutanoate (2-oxoisovalerate) to form 3-carboxy-3-hydroxy-4-methylpentanoate (2-isopropylmalate). Carries out the first step of the leucine biosynthesis pathway. Also displays a low citramalate synthase activity, using pyruvate as substrate, but is unable to use 2-oxoglutarate. The polypeptide is 2-isopropylmalate synthase (Sulfolobus acidocaldarius (strain ATCC 33909 / DSM 639 / JCM 8929 / NBRC 15157 / NCIMB 11770)).